Consider the following 277-residue polypeptide: Undecaprenyl-diphosphatase (277 aa).

The next 6 helical transmembrane spans lie at 47 to 67 (FNIIIQLAAILAVVWEFRGKI), 85 to 105 (ANLLIAFFPAVVLGVLFADLI), 108 to 128 (WLFNPITVALALVVGGVVMLW), 187 to 207 (FSFFLAMPTMVGAAVYSGYVY), 218 to 238 (VFAVGFVTSFVFAMLAVRALL), and 249 to 269 (FAWYRIAFGLLILATWQFHLI).

It belongs to the UppP family.

It localises to the cell inner membrane. The enzyme catalyses di-trans,octa-cis-undecaprenyl diphosphate + H2O = di-trans,octa-cis-undecaprenyl phosphate + phosphate + H(+). Functionally, catalyzes the dephosphorylation of undecaprenyl diphosphate (UPP). Confers resistance to bacitracin. The chain is Undecaprenyl-diphosphatase from Pseudomonas aeruginosa (strain ATCC 15692 / DSM 22644 / CIP 104116 / JCM 14847 / LMG 12228 / 1C / PRS 101 / PAO1).